The chain runs to 449 residues: Ribulose bisphosphate carboxylase large chain (449 aa).

The propeptide occupies 1 to 2; sequence MS. At proline 3 the chain carries N-acetylproline. An N6,N6,N6-trimethyllysine modification is found at lysine 14. Asparagine 123 and threonine 173 together coordinate substrate. The Proton acceptor role is filled by lysine 175. Residue lysine 177 coordinates substrate. Mg(2+) contacts are provided by lysine 201, aspartate 203, and glutamate 204. Position 201 is an N6-carboxylysine (lysine 201). Residue histidine 294 is the Proton acceptor of the active site. 3 residues coordinate substrate: arginine 295, histidine 327, and serine 379.

This sequence belongs to the RuBisCO large chain family. Type I subfamily. Heterohexadecamer of 8 large chains and 8 small chains; disulfide-linked. The disulfide link is formed within the large subunit homodimers. Mg(2+) serves as cofactor. Post-translationally, the disulfide bond which can form in the large chain dimeric partners within the hexadecamer appears to be associated with oxidative stress and protein turnover.

It localises to the plastid. The protein localises to the chloroplast. It carries out the reaction 2 (2R)-3-phosphoglycerate + 2 H(+) = D-ribulose 1,5-bisphosphate + CO2 + H2O. The catalysed reaction is D-ribulose 1,5-bisphosphate + O2 = 2-phosphoglycolate + (2R)-3-phosphoglycerate + 2 H(+). RuBisCO catalyzes two reactions: the carboxylation of D-ribulose 1,5-bisphosphate, the primary event in carbon dioxide fixation, as well as the oxidative fragmentation of the pentose substrate in the photorespiration process. Both reactions occur simultaneously and in competition at the same active site. This chain is Ribulose bisphosphate carboxylase large chain, found in Hippocratea richardiana.